Here is a 202-residue protein sequence, read N- to C-terminus: GTP cyclohydrolase 1 (202 aa).

Residues Cys90, His93, and Cys163 each contribute to the Zn(2+) site.

Belongs to the GTP cyclohydrolase I family. As to quaternary structure, toroid-shaped homodecamer, composed of two pentamers of five dimers.

It catalyses the reaction GTP + H2O = 7,8-dihydroneopterin 3'-triphosphate + formate + H(+). The protein operates within cofactor biosynthesis; 7,8-dihydroneopterin triphosphate biosynthesis; 7,8-dihydroneopterin triphosphate from GTP: step 1/1. The chain is GTP cyclohydrolase 1 from Mycolicibacterium vanbaalenii (strain DSM 7251 / JCM 13017 / BCRC 16820 / KCTC 9966 / NRRL B-24157 / PYR-1) (Mycobacterium vanbaalenii).